The primary structure comprises 366 residues: UDP-N-acetylglucosamine--N-acetylmuramyl-(pentapeptide) pyrophosphoryl-undecaprenol N-acetylglucosamine transferase (366 aa).

UDP-N-acetyl-alpha-D-glucosamine-binding positions include 10 to 12 (TGG), Asn124, Arg165, Ser192, Ile247, and Gln292.

This sequence belongs to the glycosyltransferase 28 family. MurG subfamily.

The protein resides in the cell inner membrane. It carries out the reaction di-trans,octa-cis-undecaprenyl diphospho-N-acetyl-alpha-D-muramoyl-L-alanyl-D-glutamyl-meso-2,6-diaminopimeloyl-D-alanyl-D-alanine + UDP-N-acetyl-alpha-D-glucosamine = di-trans,octa-cis-undecaprenyl diphospho-[N-acetyl-alpha-D-glucosaminyl-(1-&gt;4)]-N-acetyl-alpha-D-muramoyl-L-alanyl-D-glutamyl-meso-2,6-diaminopimeloyl-D-alanyl-D-alanine + UDP + H(+). It functions in the pathway cell wall biogenesis; peptidoglycan biosynthesis. Cell wall formation. Catalyzes the transfer of a GlcNAc subunit on undecaprenyl-pyrophosphoryl-MurNAc-pentapeptide (lipid intermediate I) to form undecaprenyl-pyrophosphoryl-MurNAc-(pentapeptide)GlcNAc (lipid intermediate II). The chain is UDP-N-acetylglucosamine--N-acetylmuramyl-(pentapeptide) pyrophosphoryl-undecaprenol N-acetylglucosamine transferase from Geotalea daltonii (strain DSM 22248 / JCM 15807 / FRC-32) (Geobacter daltonii).